Consider the following 261-residue polypeptide: Sulfur carrier protein FdhD (261 aa).

C105 serves as the catalytic Cysteine persulfide intermediate. 245–250 (FIRGDR) provides a ligand contact to Mo-bis(molybdopterin guanine dinucleotide).

This sequence belongs to the FdhD family.

The protein resides in the cytoplasm. Its function is as follows. Required for formate dehydrogenase (FDH) activity. Acts as a sulfur carrier protein that transfers sulfur from IscS to the molybdenum cofactor prior to its insertion into FDH. This is Sulfur carrier protein FdhD from Listeria monocytogenes serotype 4b (strain F2365).